Consider the following 158-residue polypeptide: Phosphopantetheine adenylyltransferase (158 aa).

Serine 8 is a binding site for substrate. ATP contacts are provided by residues 8–9 (SF) and histidine 16. Substrate is bound by residues lysine 40, threonine 72, and arginine 86. ATP-binding positions include 87–89 (GLR), glutamate 97, and 122–128 (HSFLSSS).

It belongs to the bacterial CoaD family. In terms of assembly, homohexamer. It depends on Mg(2+) as a cofactor.

Its subcellular location is the cytoplasm. The enzyme catalyses (R)-4'-phosphopantetheine + ATP + H(+) = 3'-dephospho-CoA + diphosphate. The protein operates within cofactor biosynthesis; coenzyme A biosynthesis; CoA from (R)-pantothenate: step 4/5. Its function is as follows. Reversibly transfers an adenylyl group from ATP to 4'-phosphopantetheine, yielding dephospho-CoA (dPCoA) and pyrophosphate. In Prochlorococcus marinus (strain NATL1A), this protein is Phosphopantetheine adenylyltransferase.